Reading from the N-terminus, the 715-residue chain is 1,4-alpha-glucan branching enzyme GlgB (715 aa).

The active-site Nucleophile is D396. Residue E449 is the Proton donor of the active site.

This sequence belongs to the glycosyl hydrolase 13 family. GlgB subfamily. Monomer.

The catalysed reaction is Transfers a segment of a (1-&gt;4)-alpha-D-glucan chain to a primary hydroxy group in a similar glucan chain.. It functions in the pathway glycan biosynthesis; glycogen biosynthesis. Catalyzes the formation of the alpha-1,6-glucosidic linkages in glycogen by scission of a 1,4-alpha-linked oligosaccharide from growing alpha-1,4-glucan chains and the subsequent attachment of the oligosaccharide to the alpha-1,6 position. This chain is 1,4-alpha-glucan branching enzyme GlgB, found in Aliivibrio fischeri (strain ATCC 700601 / ES114) (Vibrio fischeri).